The sequence spans 448 residues: Adenylosuccinate synthetase (448 aa).

Residues 22–28 (GDEGKGK) and 50–52 (GHT) contribute to the GTP site. Asp23 functions as the Proton acceptor in the catalytic mechanism. Mg(2+)-binding residues include Asp23 and Gly50. IMP-binding positions include 23 to 26 (DEGK), 48 to 51 (NAGH), Thr139, Arg153, Gln234, Thr249, and Arg321. His51 serves as the catalytic Proton donor. 317 to 323 (SVTGRPR) is a binding site for substrate. Residues Arg323, 349–351 (KLD), and 431–433 (STG) each bind GTP.

This sequence belongs to the adenylosuccinate synthetase family. As to quaternary structure, homodimer. Mg(2+) serves as cofactor.

The protein localises to the cytoplasm. The catalysed reaction is IMP + L-aspartate + GTP = N(6)-(1,2-dicarboxyethyl)-AMP + GDP + phosphate + 2 H(+). Its pathway is purine metabolism; AMP biosynthesis via de novo pathway; AMP from IMP: step 1/2. Plays an important role in the de novo pathway of purine nucleotide biosynthesis. Catalyzes the first committed step in the biosynthesis of AMP from IMP. This chain is Adenylosuccinate synthetase, found in Burkholderia thailandensis (strain ATCC 700388 / DSM 13276 / CCUG 48851 / CIP 106301 / E264).